A 98-amino-acid polypeptide reads, in one-letter code: Aspartyl/glutamyl-tRNA(Asn/Gln) amidotransferase subunit C (98 aa).

Belongs to the GatC family. Heterotrimer of A, B and C subunits.

The catalysed reaction is L-glutamyl-tRNA(Gln) + L-glutamine + ATP + H2O = L-glutaminyl-tRNA(Gln) + L-glutamate + ADP + phosphate + H(+). The enzyme catalyses L-aspartyl-tRNA(Asn) + L-glutamine + ATP + H2O = L-asparaginyl-tRNA(Asn) + L-glutamate + ADP + phosphate + 2 H(+). In terms of biological role, allows the formation of correctly charged Asn-tRNA(Asn) or Gln-tRNA(Gln) through the transamidation of misacylated Asp-tRNA(Asn) or Glu-tRNA(Gln) in organisms which lack either or both of asparaginyl-tRNA or glutaminyl-tRNA synthetases. The reaction takes place in the presence of glutamine and ATP through an activated phospho-Asp-tRNA(Asn) or phospho-Glu-tRNA(Gln). The protein is Aspartyl/glutamyl-tRNA(Asn/Gln) amidotransferase subunit C of Kocuria rhizophila (strain ATCC 9341 / DSM 348 / NBRC 103217 / DC2201).